The primary structure comprises 1432 residues: uncharacterized protein (1432 aa).

Disordered regions lie at residues 1-72, 208-237, 280-335, 531-607, 690-712, 738-801, 896-950, 1044-1076, and 1303-1359; these read MDTI…NYYN, NKIE…NNGQ, ERNE…ENNL, IVKS…NNSS, QNKS…TTTT, NNTL…NGGR, QSNN…SPPT, NINS…NNNN, and NNNN…NTTP. 3 stretches are compositionally biased toward low complexity: residues 14 to 72, 208 to 225, and 284 to 300; these read INNN…NYYN, NKIE…NNEN, and LTSP…LPSS. Residues 315 to 325 are compositionally biased toward acidic residues; that stretch reads QEEEEEEEEED. 5 stretches are compositionally biased toward low complexity: residues 536–575, 583–607, 691–712, 744–779, and 896–944; these read SSSN…NKNK, DNNT…NNSS, NKSP…TTTT, NMNN…NSNN, and QSNN…SSSN. The segment covering 1311 to 1320 has biased composition (gly residues); that stretch reads NGNGNGGING. Positions 1321-1333 are enriched in low complexity; it reads NNGNNSGSNNKEN. Positions 1334 to 1346 are enriched in gly residues; sequence GGTGAGIGGGGGL. The span at 1347 to 1359 shows a compositional bias: low complexity; it reads QLPNNNNNNNTTP.

This is an uncharacterized protein from Dictyostelium discoideum (Social amoeba).